The primary structure comprises 192 residues: VQ motif-containing protein 22 (192 aa).

The span at 24–38 (ASTAVTTTTAGDTTS) shows a compositional bias: low complexity. Residues 24 to 65 (ASTAVTTTTAGDTTSIDSRLSPETGRVTKPTRRRSRASRRTP) form a disordered region. A compositionally biased stretch (basic residues) spans 52–62 (KPTRRRSRASR). Residues 76–85 (FRAMVQQYTG) carry the VQ motif. 2 disordered regions span residues 101–135 (FSLTSSSDPSAGSSQQAPWQYNFQPHAPLQPPQRP) and 163–192 (FGTVDGSGGGGSAPSSKEATNSNSSSSRLQ). 2 stretches are compositionally biased toward low complexity: residues 102 to 114 (SLTSSSDPSAGSS) and 175 to 192 (APSSKEATNSNSSSSRLQ).

The protein localises to the nucleus. Functionally, may function as positive regulator of plant growth. This Arabidopsis thaliana (Mouse-ear cress) protein is VQ motif-containing protein 22.